Consider the following 154-residue polypeptide: Large ribosomal subunit protein uL15 (154 aa).

Residues 17–44 are disordered; sequence KRVGRGIGSGTGKTGGRGVKGQRSRSGV. Residues 21 to 35 are compositionally biased toward gly residues; it reads RGIGSGTGKTGGRGV.

The protein belongs to the universal ribosomal protein uL15 family. In terms of assembly, part of the 50S ribosomal subunit.

Its function is as follows. Binds to the 23S rRNA. The protein is Large ribosomal subunit protein uL15 of Bartonella henselae (strain ATCC 49882 / DSM 28221 / CCUG 30454 / Houston 1) (Rochalimaea henselae).